Consider the following 422-residue polypeptide: MEKTEKIQADMQALGRAARAAARIVAKADTAVKNHALIAMARAIRCHEASLLAANAADVAQARNKGLEPAMIDRLTLTPKGIASMAAGLEQIAALSDPIGAVTDLDYRPSGIQVGRMRVPLGVIAIIYEARPNVTADAAGLCLKAGNAAILRGGSEAIQSNQAIAACVQEGLRSAGLPEHAVQVVETTDRAAVGELITMSEYVDMVVPRGGKGLIERIANEARVPVIKHLDGVCHVYVDLSADLEKAVRVADNAKTQRYGTCNTMETLLVHAGIAERFLPRICKILLEKGVELRGDEAARALVAGIKPAVEEDWYAEYLAPVLSVRIVEDIDQAITHIATYGSQHTDAIVTEDYSRARQFLREVDSSSVMINASTRFADGFEYGLGAEIGISTDKLHARGPVGLEGLTSQKFIVLGDGHIRE.

Belongs to the gamma-glutamyl phosphate reductase family.

It is found in the cytoplasm. The catalysed reaction is L-glutamate 5-semialdehyde + phosphate + NADP(+) = L-glutamyl 5-phosphate + NADPH + H(+). It participates in amino-acid biosynthesis; L-proline biosynthesis; L-glutamate 5-semialdehyde from L-glutamate: step 2/2. Catalyzes the NADPH-dependent reduction of L-glutamate 5-phosphate into L-glutamate 5-semialdehyde and phosphate. The product spontaneously undergoes cyclization to form 1-pyrroline-5-carboxylate. The protein is Gamma-glutamyl phosphate reductase of Nitrosomonas europaea (strain ATCC 19718 / CIP 103999 / KCTC 2705 / NBRC 14298).